The primary structure comprises 274 residues: Diaminopimelate epimerase (274 aa).

Positions 11, 44, and 64 each coordinate substrate. The active-site Proton donor is the Cys73. Substrate is bound by residues 74-75 (GN), Asn157, Asn190, and 208-209 (ER). Cys217 (proton acceptor) is an active-site residue. Residue 218–219 (GS) participates in substrate binding.

The protein belongs to the diaminopimelate epimerase family. As to quaternary structure, homodimer.

The protein localises to the cytoplasm. The enzyme catalyses (2S,6S)-2,6-diaminopimelate = meso-2,6-diaminopimelate. It functions in the pathway amino-acid biosynthesis; L-lysine biosynthesis via DAP pathway; DL-2,6-diaminopimelate from LL-2,6-diaminopimelate: step 1/1. In terms of biological role, catalyzes the stereoinversion of LL-2,6-diaminopimelate (L,L-DAP) to meso-diaminopimelate (meso-DAP), a precursor of L-lysine and an essential component of the bacterial peptidoglycan. This chain is Diaminopimelate epimerase, found in Sodalis glossinidius (strain morsitans).